Here is a 337-residue protein sequence, read N- to C-terminus: Heme A synthase (337 aa).

5 helical membrane-spanning segments follow: residues 6-26, 87-107, 119-139, 154-174, and 192-212; these read ITKWLCISCIMVIATIVIGGI, FIHRLLGRITALIYIVPLIYF, LPYIIALLLFCIQGFIGWYMV, LAFHLIIAVIIYHILFYQLIK, and LIFSGIAITVVYVQIFLGALV. Histidine 256 lines the heme pocket. A run of 3 helical transmembrane segments spans residues 258-278, 285-305, and 308-328; these read LVGYSVFLVVVVLIICLLKIE, IAYFLMIVLFMQVSTGIITLL, and VPIIIASIHQLFAIILLSIII. Histidine 316 serves as a coordination point for heme.

Belongs to the COX15/CtaA family. Type 2 subfamily. Interacts with CtaB. It depends on heme b as a cofactor.

Its subcellular location is the cell membrane. The enzyme catalyses Fe(II)-heme o + 2 A + H2O = Fe(II)-heme a + 2 AH2. Its pathway is porphyrin-containing compound metabolism; heme A biosynthesis; heme A from heme O: step 1/1. Catalyzes the conversion of heme O to heme A by two successive hydroxylations of the methyl group at C8. The first hydroxylation forms heme I, the second hydroxylation results in an unstable dihydroxymethyl group, which spontaneously dehydrates, resulting in the formyl group of heme A. The chain is Heme A synthase from Rickettsia africae (strain ESF-5).